Consider the following 80-residue polypeptide: RNA-binding protein Hfq (80 aa).

Positions 10–70 (DIFLNQVRKE…ISTISPMKSV (61 aa)) constitute a Sm domain.

It belongs to the Hfq family. Homohexamer.

In terms of biological role, RNA chaperone that binds small regulatory RNA (sRNAs) and mRNAs to facilitate mRNA translational regulation in response to envelope stress, environmental stress and changes in metabolite concentrations. Also binds with high specificity to tRNAs. The polypeptide is RNA-binding protein Hfq (Ruminiclostridium cellulolyticum (strain ATCC 35319 / DSM 5812 / JCM 6584 / H10) (Clostridium cellulolyticum)).